The chain runs to 474 residues: Aspartyl protease family protein At5g10770 (474 aa).

The first 25 residues, 1 to 25, serve as a signal peptide directing secretion; that stretch reads MSINRNLLNIIIILCICLNLGCNDG. A Peptidase A1 domain is found at 132–469; it reads YIVTVGLGTP…DGAGGRVGFA (338 aa). Residues D150 and D352 contribute to the active site. A disulfide bond links C391 and C432. N443 carries the GPI-anchor amidated asparagine lipid modification. Positions 444 to 474 are cleaved as a propeptide — removed in mature form; it reads AAIFGNVQQQTLEVVYDGAGGRVGFAPNGCS.

It belongs to the peptidase A1 family.

It is found in the cell membrane. Probably not redundant with AED1 and not involved in restriction of salicylic acid (SA) or systemic acquired resistance (SAR) signaling. This Arabidopsis thaliana (Mouse-ear cress) protein is Aspartyl protease family protein At5g10770.